A 445-amino-acid polypeptide reads, in one-letter code: Phosphoglucosamine mutase (445 aa).

Ser102 serves as the catalytic Phosphoserine intermediate. Mg(2+) contacts are provided by Ser102, Asp241, Asp243, and Asp245. Position 102 is a phosphoserine (Ser102).

It belongs to the phosphohexose mutase family. Mg(2+) is required as a cofactor. Post-translationally, activated by phosphorylation.

It carries out the reaction alpha-D-glucosamine 1-phosphate = D-glucosamine 6-phosphate. Catalyzes the conversion of glucosamine-6-phosphate to glucosamine-1-phosphate. The polypeptide is Phosphoglucosamine mutase (Citrobacter koseri (strain ATCC BAA-895 / CDC 4225-83 / SGSC4696)).